We begin with the raw amino-acid sequence, 271 residues long: Phosphatidylglycerol--prolipoprotein diacylglyceryl transferase (271 aa).

A run of 7 helical transmembrane segments spans residues 18-38, 60-80, 103-123, 137-157, 181-201, 209-229, and 236-256; these read IFGL…LVAL, YFIW…ILIY, FVGI…IATY, LDLV…GNFL, PSQL…LLLI, GELI…CEFF, and IGFV…MFLL. Arg152 serves as a coordination point for a 1,2-diacyl-sn-glycero-3-phospho-(1'-sn-glycerol).

This sequence belongs to the Lgt family.

The protein localises to the cell inner membrane. The enzyme catalyses L-cysteinyl-[prolipoprotein] + a 1,2-diacyl-sn-glycero-3-phospho-(1'-sn-glycerol) = an S-1,2-diacyl-sn-glyceryl-L-cysteinyl-[prolipoprotein] + sn-glycerol 1-phosphate + H(+). It functions in the pathway protein modification; lipoprotein biosynthesis (diacylglyceryl transfer). Catalyzes the transfer of the diacylglyceryl group from phosphatidylglycerol to the sulfhydryl group of the N-terminal cysteine of a prolipoprotein, the first step in the formation of mature lipoproteins. The chain is Phosphatidylglycerol--prolipoprotein diacylglyceryl transferase from Campylobacter lari (strain RM2100 / D67 / ATCC BAA-1060).